We begin with the raw amino-acid sequence, 189 residues long: GTPase KRas (189 aa).

Residue Met-1 is modified to N-acetylmethionine. Residue Thr-2 is modified to N-acetylthreonine; in GTPase KRas, N-terminally processed. Residues 10–18 (GAGGVGKSA), 29–35 (VDEYDPT), and 59–60 (AG) each bind GTP. Residues 32–40 (YDPTIEDSY) carry the Effector region motif. Lys-104 bears the N6-acetyllysine mark. 116–119 (NKCD) contributes to the GTP binding site. A hypervariable region region spans residues 166 to 185 (YRLKKISKEEKTPGCVKIKK). A Glycyl lysine isopeptide (Lys-Gly) (interchain with G-Cter in ubiquitin) cross-link involves residue Lys-170. A lipid anchor (S-palmitoyl cysteine) is attached at Cys-180. 3 N6-palmitoyl lysine lipidation sites follow: Lys-182, Lys-184, and Lys-185. A Cysteine methyl ester modification is found at Cys-186. Cys-186 is lipidated: S-farnesyl cysteine. Positions 187–189 (VIM) are cleaved as a propeptide — removed in mature form.

The protein belongs to the small GTPase superfamily. Ras family. As to quaternary structure, interacts with PHLPP. Interacts (active GTP-bound form preferentially) with RGS14. Interacts (when farnesylated) with PDE6D; this promotes dissociation from the cell membrane. Interacts with SOS1. Interacts (when farnesylated) with GPR31. Interacts with RAP1GDS1. Interacts (active GTP-bound form) with both SHOC2 and PP1c (all isoforms) to form a tertiary complex; SHOC2 and PP1c preferably bind M-Ras/MRAS, but they also bind K-Ras/KRAS, N-Ras/NRAS and H-Ras/HRAS. Interacts (GTP-bound form) with MAPKAP1/SIN1; inhibiting K-Ras/KRAS activity. In terms of assembly, interacts (when farnesylated) with GPR31. Acetylation at Lys-104 prevents interaction with guanine nucleotide exchange factors (GEFs). In terms of processing, ubiquitinated by the BCR(LZTR1) E3 ubiquitin ligase complex at Lys-170 in a non-degradative manner, leading to inhibit Ras signaling by decreasing Ras association with membranes. Post-translationally, palmitoylated at Lys-182, Lys-184 and Lys-185. Lysine-depalmitoylation by SIRT2 promotes its localization to endomembranes in endocytic pathways.

The protein resides in the cell membrane. Its subcellular location is the endomembrane system. The protein localises to the cytoplasm. It is found in the cytosol. The enzyme catalyses GTP + H2O = GDP + phosphate + H(+). Alternates between an inactive form bound to GDP and an active form bound to GTP. Activated by a guanine nucleotide-exchange factor (GEF) and inactivated by a GTPase-activating protein (GAP). Interaction with SOS1 promotes exchange of bound GDP to GTP. Its function is as follows. Ras proteins bind GDP/GTP and possess intrinsic GTPase activity. Plays an important role in the regulation of cell proliferation. Plays a role in promoting oncogenic events by inducing transcriptional silencing of tumor suppressor genes (TSGs) in colorectal cancer (CRC) cells in a ZNF304-dependent manner. This Rattus norvegicus (Rat) protein is GTPase KRas (Kras).